A 319-amino-acid chain; its full sequence is ATP-dependent 6-phosphofructokinase (319 aa).

G11 contacts ATP. Position 21–25 (21–25 (RAVVR)) interacts with ADP. ATP contacts are provided by residues 72–73 (RC) and 102–105 (GDGS). D103 lines the Mg(2+) pocket. 125-127 (TID) contacts substrate. Residue D127 is the Proton acceptor of the active site. ADP is bound at residue R154. Residues R162 and 169–171 (MGR) each bind substrate. Residues 185–187 (GAE), R211, and 213–215 (KKH) contribute to the ADP site. Substrate contacts are provided by residues E222, R243, and 249–252 (HVQR).

It belongs to the phosphofructokinase type A (PFKA) family. ATP-dependent PFK group I subfamily. Prokaryotic clade 'B1' sub-subfamily. As to quaternary structure, homotetramer. It depends on Mg(2+) as a cofactor.

It localises to the cytoplasm. The enzyme catalyses beta-D-fructose 6-phosphate + ATP = beta-D-fructose 1,6-bisphosphate + ADP + H(+). It functions in the pathway carbohydrate degradation; glycolysis; D-glyceraldehyde 3-phosphate and glycerone phosphate from D-glucose: step 3/4. With respect to regulation, allosterically activated by ADP and other diphosphonucleosides, and allosterically inhibited by phosphoenolpyruvate. Catalyzes the phosphorylation of D-fructose 6-phosphate to fructose 1,6-bisphosphate by ATP, the first committing step of glycolysis. In Geobacillus sp. (strain WCH70), this protein is ATP-dependent 6-phosphofructokinase.